A 118-amino-acid chain; its full sequence is uncharacterized protein (118 aa).

Residues 1–12 (MADDNVSFTDQG) show a composition bias toward polar residues. The segment at 1–63 (MADDNVSFTD…KKGKTKKVRK (63 aa)) is disordered. Residues 39–63 (TKKKGKKNKKSKKKAKKGKTKKVRK) are compositionally biased toward basic residues. A helical membrane pass occupies residues 81 to 101 (FCAGIIVAMIMLFVIIIYGII).

It localises to the membrane. This is an uncharacterized protein from Caenorhabditis elegans.